The following is a 362-amino-acid chain: Probable non-structural 41.0 kDa protein (362 aa).

A disordered region spans residues 341–362; the sequence is MNAAAPSAPTPTELPVFSPPSS.

The chain is Probable non-structural 41.0 kDa protein (S6) from Maize rough dwarf virus (MRDV).